The sequence spans 221 residues: NEDD4 family-interacting protein 1 (221 aa).

An N-acetylalanine modification is found at Ala2. The tract at residues 2-41 is interaction with UBE2L3; the sequence is ALALAALAAVEPACGTGYQQLQNEEEPGEREQTAGDAPPP. The Cytoplasmic segment spans residues 2–116; sequence ALALAALAAV…ADQLRIGNDG (115 aa). The tract at residues 15–45 is disordered; that stretch reads CGTGYQQLQNEEEPGEREQTAGDAPPPYSSI. 3 consecutive short sequence motifs (PPxY motif) follow at residues 39 to 42, 64 to 67, and 74 to 76; these read PPPY, PPSY, and PSY. The tract at residues 42–76 is interaction with ITCH; that stretch reads YSSISAESAAYFDYKDESGFPKPPSYNVATTLPSY. The chain crosses the membrane as a helical span at residues 117-137; the sequence is IFMLTFFMAFLFNWIGFFLSF. The Extracellular segment spans residues 138–143; it reads CLTTSA. A helical transmembrane segment spans residues 144 to 164; the sequence is AGRYGAISGFGLSLIKWILIV. At 165-172 the chain is on the cytoplasmic side; it reads RFSTYFPG. Residues 173–193 form a helical membrane-spanning segment; that stretch reads YFDGQYWLWWVFLVLGFLLFL. Over 194–221 the chain is Extracellular; sequence RGFINYAKVRKMPETFSNLPRTRVLFIY.

As to quaternary structure, forms heterodimers with NDFIP2. Interacts with several E3 ubiquitin-protein ligases, including ITCH, NEDD4, NEDD4L and WWP2. The interaction with NEDD4, NEDD4L and ITCH leads to relocalization of these proteins to exosomes and eventually to exosomal secretion. Interacts with SR1402. Interacts with SLC11A2/DMT1. Interacts with PTEN. May interact with phosphorylated EGFR. Interacts with BRAT1. Interacts with KCNH2. Interacts with MAVS. Part of a complex containing ITCH, NDFIP1 and MAP3K7. Interacts (via N-terminus) with UBE2L3; the interaction mediates recruitment of UBE2L3 to ITCH. Post-translationally, ubiquitinated by NEDD4; mono-, di- and polyubiquitinated forms are detected. Ubiquitination regulates its degradation. In terms of processing, undergoes transient tyrosine phosphorylation following EGF stimulation, most probably by catalyzed by SRC. Phosphorylation SRC is enhanced in the presence of NDFIP2 which may act as a scaffold to recruit SRC to NDFIP1.

It localises to the endosome membrane. It is found in the golgi apparatus membrane. The protein resides in the synapse. The protein localises to the synaptosome. Its subcellular location is the cell projection. It localises to the dendrite. It is found in the secreted. Activates HECT domain-containing E3 ubiquitin-protein ligases, including NEDD4 and ITCH, and consequently modulates the stability of their targets. As a result, controls many cellular processes. Prevents chronic T-helper cell-mediated inflammation by activating ITCH and thus controlling JUNB degradation. Promotes pancreatic beta cell death through degradation of JUNB and inhibition of the unfolded protein response, leading to reduction of insulin secretion. Restricts the production of pro-inflammatory cytokines in effector Th17 T-cells by promoting ITCH-mediated ubiquitination degradation of RORC. Together with NDFIP2, limits the cytokine signaling and expansion of effector Th2 T-cells by promoting degradation of JAK1, probably by ITCH- and NEDD4L-mediated ubiquitination. Regulates peripheral T-cell tolerance to self and foreign antigens, forcing the exit of naive CD4+ T-cells from the cell cycle before they become effector T-cells. Negatively regulates RLR-mediated antiviral response by promoting SMURF1-mediated ubiquitination and subsequent degradation of MAVS. Negatively regulates KCNH2 potassium channel activity by decreasing its cell-surface expression and interfering with channel maturation through recruitment of NEDD4L to the Golgi apparatus where it mediates KCNH2 degradation. In cortical neurons, mediates the ubiquitination of the divalent metal transporter SLC11A2/DMT1 by NEDD4L, leading to its down-regulation and protection of the cells from cobalt and iron toxicity. Important for normal development of dendrites and dendritic spines in cortex. Enhances the ubiquitination of BRAT1 mediated by: NEDD4, NEDD4L and ITCH and is required for the nuclear localization of ubiquitinated BRAT1. Enhances the ITCH-mediated ubiquitination of MAP3K7 by recruiting E2 ubiquitin-conjugating enzyme UBE2L3 to ITCH. Modulates EGFR signaling through multiple pathways. In particular, may regulate the ratio of AKT1-to-MAPK8 signaling in response to EGF, acting on AKT1 probably through PTEN destabilization and on MAPK8 through ITCH-dependent MAP2K4 inactivation. As a result, may control cell growth rate. Inhibits cell proliferation by promoting PTEN nuclear localization and changing its signaling specificity. This chain is NEDD4 family-interacting protein 1 (Ndfip1), found in Rattus norvegicus (Rat).